The following is a 343-amino-acid chain: Probable fructokinase-7 (343 aa).

N-acetylglycine is present on glycine 2.

The protein belongs to the carbohydrate kinase PfkB family.

The catalysed reaction is D-fructose + ATP = D-fructose 6-phosphate + ADP + H(+). Its pathway is glycan biosynthesis; starch biosynthesis. Its function is as follows. May play an important role in maintaining the flux of carbon towards starch formation. This chain is Probable fructokinase-7, found in Arabidopsis thaliana (Mouse-ear cress).